A 334-amino-acid chain; its full sequence is HTH-type transcriptional repressor PurR (334 aa).

The HTH lacI-type domain maps to Ala-2–Val-56. The H-T-H motif DNA-binding region spans Ile-4–Asn-23. A DNA-binding region spans residues Ser-48 to Val-56. Residues Tyr-73, Lys-189, Thr-191, Phe-220, and Asp-274 each contribute to the hypoxanthine site.

As to quaternary structure, homodimer.

It participates in purine metabolism; purine nucleotide biosynthesis [regulation]. Is the main repressor of the genes involved in the de novo synthesis of purine nucleotides, regulating purB, purC, purEK, purF, purHD, purL, purMN and guaBA expression. PurR is allosterically activated to bind its cognate DNA by binding the purine corepressors, hypoxanthine or guanine, thereby effecting transcription repression. The polypeptide is HTH-type transcriptional repressor PurR (Pasteurella multocida (strain Pm70)).